Here is a 338-residue protein sequence, read N- to C-terminus: 1-aminocyclopropane-1-carboxylate deaminase (338 aa).

N6-(pyridoxal phosphate)lysine is present on Lys-51. The active-site Nucleophile is Ser-78.

Belongs to the ACC deaminase/D-cysteine desulfhydrase family. As to quaternary structure, homotrimer. Pyridoxal 5'-phosphate serves as cofactor.

The enzyme catalyses 1-aminocyclopropane-1-carboxylate + H2O = 2-oxobutanoate + NH4(+). Its function is as follows. Catalyzes a cyclopropane ring-opening reaction, the irreversible conversion of 1-aminocyclopropane-1-carboxylate (ACC) to ammonia and alpha-ketobutyrate. Allows growth on ACC as a nitrogen source. In Burkholderia thailandensis (strain ATCC 700388 / DSM 13276 / CCUG 48851 / CIP 106301 / E264), this protein is 1-aminocyclopropane-1-carboxylate deaminase.